A 352-amino-acid chain; its full sequence is Dihydrorhizobitoxine desaturase (352 aa).

3 helical membrane-spanning segments follow: residues 53–73, 89–109, and 204–224; these read LATL…IGAY, LAKN…YPLF, and IGIL…LFWI.

The protein belongs to the fatty acid desaturase type 1 family.

It is found in the cell inner membrane. It catalyses the reaction dihydrorhizobitoxine + 2 reduced [2Fe-2S]-[ferredoxin] + O2 + 2 H(+) = rhizobitoxine + 2 oxidized [2Fe-2S]-[ferredoxin] + 2 H2O. Involved in the biosynthesis of the nodulation enhancer compound rhizobitoxine. Catalyzes the final step of the pathway, the introduction of a carbon double bond into the C3 position of dihydrorhizobitoxine to produce rhizobitoxine. In Bradyrhizobium elkanii, this protein is Dihydrorhizobitoxine desaturase.